Here is a 117-residue protein sequence, read N- to C-terminus: Minor capsid protein VP2 (117 aa).

The protein belongs to the lagovirus VP2 protein family. Homooligomer. The portal-like structure consists in 12 copies of VP2. Interacts with capsid protein VP1.

The protein localises to the virion. Its subcellular location is the host cytoplasm. Minor structural protein that forms a portal-like structure at a unique three-fold axis of symmetry, following binding to the host receptor. The channel formed by VP2 may allow the delivery of the viral genome through the host endosomal membrane. In Rabbit hemorrhagic disease virus (strain AST89) (Ra/LV/RHDV/AST89/1989/SP), this protein is Minor capsid protein VP2.